Here is a 264-residue protein sequence, read N- to C-terminus: MSKRKQILVTNDDGYESEGLLALVEALKPLGDVTVVAPTTEKSACGHSLTLTRPLRFVEVSEHFYKLDDGTPTDCIFLSLTKLFANEKKPDIVISGINIGANMGEDITYSGTASAAMEAVLQGIPGIAVSQVYMNSGASIREFGYELAQQSIIKLVQKIFEGSYPLPDRKFLNVNIPPIPAAECKGFKSTRLGNKHYGFHAEVHYNPRGLEYYWIGLPRLEWMETAGHTTDFEAVKEDYISITPVQLDMTSHSDIHNLEEWLNK.

A divalent metal cation is bound by residues aspartate 12, aspartate 13, serine 43, and asparagine 98.

This sequence belongs to the SurE nucleotidase family. A divalent metal cation serves as cofactor.

Its subcellular location is the cytoplasm. It catalyses the reaction a ribonucleoside 5'-phosphate + H2O = a ribonucleoside + phosphate. Functionally, nucleotidase that shows phosphatase activity on nucleoside 5'-monophosphates. The protein is 5'-nucleotidase SurE of Sulfurovum sp. (strain NBC37-1).